The primary structure comprises 120 residues: MKLTRRESKNRRHRRVRGKVVGSPERPRLAVFRSNEHIYAQVIDDSQHQTIVAASTLEPELKSSLASGANRDASVQVGKLIAVRSLEKGITKVVFDRGGNLYHGRVKALADAAREAGLDF.

Residues 1–22 (MKLTRRESKNRRHRRVRGKVVG) are disordered. Over residues 8-18 (SKNRRHRRVRG) the composition is skewed to basic residues.

The protein belongs to the universal ribosomal protein uL18 family. Part of the 50S ribosomal subunit; part of the 5S rRNA/L5/L18/L25 subcomplex. Contacts the 5S and 23S rRNAs.

Its function is as follows. This is one of the proteins that bind and probably mediate the attachment of the 5S RNA into the large ribosomal subunit, where it forms part of the central protuberance. The chain is Large ribosomal subunit protein uL18 from Nostoc punctiforme (strain ATCC 29133 / PCC 73102).